A 469-amino-acid chain; its full sequence is Flap endonuclease 1-B (469 aa).

An N-domain region spans residues 1–103 (MGIKGLTGLL…GVLSKRLERR (103 aa)). D32 provides a ligand contact to Mg(2+). DNA contacts are provided by R45 and R69. The Mg(2+) site is built by D85, E157, E159, D183, and D185. The I-domain stretch occupies residues 121–257 (DVDRFSRRTV…KSALKLIREY (137 aa)). Residue E157 coordinates DNA. DNA contacts are provided by G235 and D237. Residue D237 coordinates Mg(2+). The segment at 274–354 (QKAAQAAVES…GGMQIPEEWP (81 aa)) is disordered. Acidic residues-rich tracts occupy residues 282-295 (ESDEESEHEEEDEP) and 302-317 (EMPDPVEEDQDGEEEA). The span at 326–342 (PKKKKASSKTKEKRKGK) shows a compositional bias: basic residues. Positions 412-420 (QQGRLDGFF) are interaction with PCNA. The disordered stretch occupies residues 424-469 (PKEKAAAPAPVGKAKGKGKIDAKAKGTKRKVDEKAESSAGKKPRKK). Residues 441-459 (GKIDAKAKGTKRKVDEKAE) are compositionally biased toward basic and acidic residues.

Belongs to the XPG/RAD2 endonuclease family. FEN1 subfamily. In terms of assembly, interacts with PCNA. Three molecules of FEN1 bind to one PCNA trimer with each molecule binding to one PCNA monomer. PCNA stimulates the nuclease activity without altering cleavage specificity. The cofactor is Mg(2+). Post-translationally, phosphorylated. Phosphorylation upon DNA damage induces relocalization to the nuclear plasma.

Its subcellular location is the nucleus. The protein resides in the nucleolus. It is found in the nucleoplasm. The protein localises to the mitochondrion. Functionally, structure-specific nuclease with 5'-flap endonuclease and 5'-3' exonuclease activities involved in DNA replication and repair. During DNA replication, cleaves the 5'-overhanging flap structure that is generated by displacement synthesis when DNA polymerase encounters the 5'-end of a downstream Okazaki fragment. It enters the flap from the 5'-end and then tracks to cleave the flap base, leaving a nick for ligation. Also involved in the long patch base excision repair (LP-BER) pathway, by cleaving within the apurinic/apyrimidinic (AP) site-terminated flap. Acts as a genome stabilization factor that prevents flaps from equilibrating into structures that lead to duplications and deletions. Also possesses 5'-3' exonuclease activity on nicked or gapped double-stranded DNA, and exhibits RNase H activity. Also involved in replication and repair of rDNA and in repairing mitochondrial DNA. This chain is Flap endonuclease 1-B, found in Laccaria bicolor (strain S238N-H82 / ATCC MYA-4686) (Bicoloured deceiver).